A 302-amino-acid chain; its full sequence is Sulfate adenylyltransferase subunit 2 (302 aa).

The protein belongs to the PAPS reductase family. CysD subfamily. As to quaternary structure, heterodimer composed of CysD, the smaller subunit, and CysN.

It catalyses the reaction sulfate + ATP + H(+) = adenosine 5'-phosphosulfate + diphosphate. It participates in sulfur metabolism; hydrogen sulfide biosynthesis; sulfite from sulfate: step 1/3. Functionally, with CysN forms the ATP sulfurylase (ATPS) that catalyzes the adenylation of sulfate producing adenosine 5'-phosphosulfate (APS) and diphosphate, the first enzymatic step in sulfur assimilation pathway. APS synthesis involves the formation of a high-energy phosphoric-sulfuric acid anhydride bond driven by GTP hydrolysis by CysN coupled to ATP hydrolysis by CysD. The protein is Sulfate adenylyltransferase subunit 2 of Escherichia coli O81 (strain ED1a).